Reading from the N-terminus, the 552-residue chain is Glutamine-dependent NAD(+) synthetase (552 aa).

Residues 11 to 253 (LRIAMAQFDF…DQWLVVDYAA (243 aa)) enclose the CN hydrolase domain. Residue E52 is the Proton acceptor; for glutaminase activity of the active site. K119 functions as the For glutaminase activity in the catalytic mechanism. Residue Y125 participates in L-glutamine binding. C157 acts as the Nucleophile; for glutaminase activity in catalysis. L-glutamine-binding residues include S183 and K189. A ligase region spans residues 275 to 552 (AWRAVVRGLK…YPITNGYSGQ (278 aa)). 298–305 (GLSGGIDS) is a binding site for ATP. A deamido-NAD(+)-binding site is contributed by N381. Position 405 (T405) interacts with ATP. Residues E410 and K522 each coordinate deamido-NAD(+).

This sequence in the C-terminal section; belongs to the NAD synthetase family.

The enzyme catalyses deamido-NAD(+) + L-glutamine + ATP + H2O = L-glutamate + AMP + diphosphate + NAD(+) + H(+). It participates in cofactor biosynthesis; NAD(+) biosynthesis; NAD(+) from deamido-NAD(+) (L-Gln route): step 1/1. In terms of biological role, catalyzes the ATP-dependent amidation of deamido-NAD to form NAD. Uses L-glutamine as a nitrogen source. The sequence is that of Glutamine-dependent NAD(+) synthetase from Xanthomonas campestris pv. campestris (strain 8004).